Reading from the N-terminus, the 174-residue chain is Large ribosomal subunit protein bL17 (174 aa).

It belongs to the bacterial ribosomal protein bL17 family. In terms of assembly, part of the 50S ribosomal subunit. Contacts protein L32.

This chain is Large ribosomal subunit protein bL17, found in Acetivibrio thermocellus (strain ATCC 27405 / DSM 1237 / JCM 9322 / NBRC 103400 / NCIMB 10682 / NRRL B-4536 / VPI 7372) (Clostridium thermocellum).